Here is a 360-residue protein sequence, read N- to C-terminus: Holliday junction branch migration complex subunit RuvB (360 aa).

The tract at residues 4-196 (HEEDLDQAEE…FGFTAHLEFY (193 aa)) is large ATPase domain (RuvB-L). Residues Leu-35, Arg-36, Gly-77, Lys-80, Thr-81, Thr-82, 143 to 145 (EDF), Arg-186, Tyr-196, and Arg-233 each bind ATP. Thr-81 is a binding site for Mg(2+). Residues 197–267 (EPDELDLIVQ…VAQDALDLYE (71 aa)) form a small ATPAse domain (RuvB-S) region. Residues 270–360 (QLGLDRLDRG…PESDPPLFED (91 aa)) are head domain (RuvB-H). DNA-binding residues include Arg-306, Arg-325, and Arg-330.

The protein belongs to the RuvB family. In terms of assembly, homohexamer. Forms an RuvA(8)-RuvB(12)-Holliday junction (HJ) complex. HJ DNA is sandwiched between 2 RuvA tetramers; dsDNA enters through RuvA and exits via RuvB. An RuvB hexamer assembles on each DNA strand where it exits the tetramer. Each RuvB hexamer is contacted by two RuvA subunits (via domain III) on 2 adjacent RuvB subunits; this complex drives branch migration. In the full resolvosome a probable DNA-RuvA(4)-RuvB(12)-RuvC(2) complex forms which resolves the HJ.

It localises to the cytoplasm. The enzyme catalyses ATP + H2O = ADP + phosphate + H(+). In terms of biological role, the RuvA-RuvB-RuvC complex processes Holliday junction (HJ) DNA during genetic recombination and DNA repair, while the RuvA-RuvB complex plays an important role in the rescue of blocked DNA replication forks via replication fork reversal (RFR). RuvA specifically binds to HJ cruciform DNA, conferring on it an open structure. The RuvB hexamer acts as an ATP-dependent pump, pulling dsDNA into and through the RuvAB complex. RuvB forms 2 homohexamers on either side of HJ DNA bound by 1 or 2 RuvA tetramers; 4 subunits per hexamer contact DNA at a time. Coordinated motions by a converter formed by DNA-disengaged RuvB subunits stimulates ATP hydrolysis and nucleotide exchange. Immobilization of the converter enables RuvB to convert the ATP-contained energy into a lever motion, pulling 2 nucleotides of DNA out of the RuvA tetramer per ATP hydrolyzed, thus driving DNA branch migration. The RuvB motors rotate together with the DNA substrate, which together with the progressing nucleotide cycle form the mechanistic basis for DNA recombination by continuous HJ branch migration. Branch migration allows RuvC to scan DNA until it finds its consensus sequence, where it cleaves and resolves cruciform DNA. This chain is Holliday junction branch migration complex subunit RuvB, found in Nocardioides sp. (strain ATCC BAA-499 / JS614).